A 91-amino-acid chain; its full sequence is Large ribosomal subunit protein uL23c (91 aa).

Belongs to the universal ribosomal protein uL23 family. In terms of assembly, part of the 50S ribosomal subunit.

It is found in the plastid. Its subcellular location is the chloroplast. In terms of biological role, binds to 23S rRNA. This Pinus koraiensis (Korean pine) protein is Large ribosomal subunit protein uL23c (rpl23).